We begin with the raw amino-acid sequence, 123 residues long: UPF0738 protein BCG9842_B4089 (123 aa).

It belongs to the UPF0738 family.

The protein is UPF0738 protein BCG9842_B4089 of Bacillus cereus (strain G9842).